A 747-amino-acid polypeptide reads, in one-letter code: Pyrin (747 aa).

The Pyrin domain occupies 1–92 (MANTRVDHLL…AEELHKATGP (92 aa)). The interval 89–181 (ATGPEHLTEE…GARSAAPLYR (93 aa)) is disordered. The span at 122 to 135 (PGEDEAQQNDDESD) shows a compositional bias: acidic residues. Zn(2+)-binding residues include Cys442, His445, Cys465, and His471. The B box-type zinc finger occupies 442-479 (CPRHMKQVQLLFCEDHREPICLICRLSQEHQGHRVRPI). Residues 479–508 (IEEAALQYKEQIRKQLERLREMRGYVEEHK) are a coiled coil. Residues 487 to 645 (KEQIRKQLER…RFSEMLGSEM (159 aa)) form a required for homotrimerization and induction of pyroptosomes region. A disordered region spans residues 698–720 (EPQDYLHPSSAQDTPELHEIHSQ).

As to quaternary structure, homotrimer. Interacts (via the B box-type zinc finger) with PSTPIP1. Interacts (via the B30.2/SPRY domain) with several components of the inflammasome complex, including CASP1 p20 and p10 subunits, CASP5, PYCARD, NLRP1, NLRP2 and NLRP3, as well as with unprocessed IL1B; this interaction may lead to autophagic degradation of these proteins. Component of the AIM2 PANoptosome complex, a multiprotein complex that drives inflammatory cell death (PANoptosis). Interacts with NFKBIA and RELA. Interacts weakly with VASP and ACTR3. Interacts with active ULK1 (phosphorylated on 'Ser-317') and BECN1 simultaneously. Also interacts with ATG16L1 (via WD repeats), and with ATG8 family members, including GABARAP, GABARAPL1 and, to a lesser extent, GABARAPL2, MAP1LC3A/LC3A and MAP1LC3C/LC3C. Interacts with TRIM21. Interacts with YWHAB, YWHAE, YWHAG, YWHAH, YWHAQ and YWHAZ; the interaction is required for the down-regulation of pyrin pro-inflammatory activity. Degraded along with the delivery of its substrates to autolysosomal compartments (at protein level). In terms of tissue distribution, expressed in spleen and, to a lesser degree in the lung. Not expressed in thymus, testis, ovary, heart, brain, liver, kidney and muscle.

The protein localises to the cytoplasm. The protein resides in the cytoskeleton. Its subcellular location is the cell projection. It localises to the ruffle. It is found in the lamellipodium. The protein localises to the cytoplasmic vesicle. The protein resides in the autophagosome. Its subcellular location is the nucleus. Its function is as follows. Involved in the regulation of innate immunity and the inflammatory response in response to IFNG/IFN-gamma. Organizes autophagic machinery by serving as a platform for the assembly of ULK1, Beclin 1/BECN1, ATG16L1, and ATG8 family members and recognizes specific autophagy targets, thus coordinating target recognition with assembly of the autophagic apparatus and initiation of autophagy. Acts as an autophagy receptor for the degradation of several inflammasome components, including CASP1, NLRP1 and NLRP3, hence preventing excessive IL1B- and IL18-mediated inflammation. However, it can also have a positive effect in the inflammatory pathway, acting as an innate immune sensor that triggers PYCARD/ASC specks formation, caspase-1 activation, and IL1B and IL18 production. Together with AIM2, also acts as a mediator of pyroptosis, necroptosis and apoptosis (PANoptosis), an integral part of host defense against pathogens, in response to bacterial infection. It is required for PSTPIP1-induced PYCARD/ASC oligomerization and inflammasome formation. Recruits PSTPIP1 to inflammasomes, and is required for PSTPIP1 oligomerization. In Rattus norvegicus (Rat), this protein is Pyrin.